The primary structure comprises 138 residues: Acidic phospholipase A2 2 (138 aa).

Positions 1 to 16 are cleaved as a signal peptide; it reads MRTLWIVAVLLLGVEG. Disulfide bonds link Cys-42/Cys-131, Cys-44/Cys-60, Cys-59/Cys-111, Cys-65/Cys-138, Cys-66/Cys-104, Cys-73/Cys-97, and Cys-91/Cys-102. Tyr-43, Gly-45, and Gly-47 together coordinate Ca(2+). His-63 is a catalytic residue. Asp-64 lines the Ca(2+) pocket. Residue Asp-105 is part of the active site.

This sequence belongs to the phospholipase A2 family. Group II subfamily. D49 sub-subfamily. The cofactor is Ca(2+). In terms of tissue distribution, expressed by the venom gland.

Its subcellular location is the secreted. It catalyses the reaction a 1,2-diacyl-sn-glycero-3-phosphocholine + H2O = a 1-acyl-sn-glycero-3-phosphocholine + a fatty acid + H(+). Snake venom phospholipase A2 (PLA2) that displays edema-inducing activities, exhibits indirect hemolytic activity, and inhibits ADP-induced platelet aggregation. PLA2 catalyzes the calcium-dependent hydrolysis of the 2-acyl groups in 3-sn-phosphoglycerides. The chain is Acidic phospholipase A2 2 from Protobothrops mucrosquamatus (Taiwan habu).